A 359-amino-acid chain; its full sequence is Probable isoaspartyl peptidase/L-asparaginase 3 (359 aa).

Catalysis depends on T224, which acts as the Nucleophile. Substrate contacts are provided by residues 252 to 255 (RVGD) and 275 to 278 (TGDG).

This sequence belongs to the Ntn-hydrolase family. As to quaternary structure, heterotetramer of two alpha and two beta chains arranged as a dimer of alpha/beta heterodimers. Post-translationally, cleaved into an alpha and beta chain by autocatalysis; this activates the enzyme. The N-terminal residue of the beta subunit is responsible for the nucleophile hydrolase activity.

It carries out the reaction Cleavage of a beta-linked Asp residue from the N-terminus of a polypeptide.. Its function is as follows. Acts in asparagine catabolism but also in the final steps of protein degradation via hydrolysis of a range of isoaspartyl dipeptides. The sequence is that of Probable isoaspartyl peptidase/L-asparaginase 3 from Arabidopsis thaliana (Mouse-ear cress).